Reading from the N-terminus, the 204-residue chain is Ras-related protein Rab-7L1 (204 aa).

Residues S33, K34, H35, Y36, K37, and T39 each contribute to the GTP site. The Effector region motif lies at 36–44 (YKSTVGVDF). T71 is subject to Phosphothreonine; by LRRK2. Residue S72 is modified to Phosphoserine. Positions 126, 156, and 157 each coordinate GTP. S-geranylgeranyl cysteine attachment occurs at residues C203 and C204.

It belongs to the small GTPase superfamily. Rab family. Interacts with LRRK2 (via the N-terminus); this interaction is direct and stimulates kinase activity.

The protein resides in the cell membrane. Its subcellular location is the cytoplasm. The protein localises to the perinuclear region. It is found in the golgi apparatus. It localises to the golgi apparatus membrane. The protein resides in the trans-Golgi network. Its subcellular location is the cytoskeleton. The small GTPases Rab are key regulators in vesicle trafficking. Essential for maintaining the integrity of endosome-trans-Golgi network structure. Together with LRRK2, plays a role in the retrograde trafficking pathway for recycling proteins, such as mannose 6 phosphate receptor (M6PR), between lysosomes and the Golgi apparatus in a retromer-dependent manner. Recruits LRRK2 to the Golgi apparatus and stimulates LRRK2 kinase activity. Stimulates phosphorylation of RAB10 'Thr-73' by LRRK2. Also regulates neuronal process morphology in the intact central nervous system (CNS). The protein is Ras-related protein Rab-7L1 (Rab29) of Mus musculus (Mouse).